Consider the following 269-residue polypeptide: Surfeit locus protein 4 (269 aa).

The next 5 helical transmembrane spans lie at Leu64–Val84, Tyr92–Trp112, Phe179–Phe199, Leu203–Trp223, and Phe239–Gly259. Residues Lys266–Trp269 carry the Di-lysine motif motif.

Belongs to the SURF4 family. Found in a complex composed at least of SURF4, TMED2 and TMED10. May interact with LMAN1. Interacts with ZFYVE27 and with KIF5A in a ZFYVE27-dependent manner. Interacts with STING1. Interacts with SAR1B. Interacts with TMEM41B.

It localises to the endoplasmic reticulum membrane. The protein localises to the endoplasmic reticulum-Golgi intermediate compartment membrane. Its subcellular location is the golgi apparatus membrane. Endoplasmic reticulum cargo receptor that mediates the export of lipoproteins by recruiting cargos into COPII vesicles to facilitate their secretion. Acts as a cargo receptor for lipoproteins bearing both APOB and APOA1, thereby regulating lipoprotein delivery and the maintenance of lipid homeostasis. Synergizes with the GTPase SAR1B to mediate transport of circulating lipoproteins. Promotes the secretion of PCSK9. Also mediates the efficient secretion of erythropoietin (EPO). May also play a role in the maintenance of the architecture of the endoplasmic reticulum-Golgi intermediate compartment and of the Golgi. The protein is Surfeit locus protein 4 of Bos taurus (Bovine).